A 430-amino-acid chain; its full sequence is MKLQKPKGTADLLPAETAKWQYIEEIARGVFNDYNFKEIRTPMFESYELFSRATGETSDIVTKEMYDFEDKGGRHIALRPEGTASAVRAYIENKLYAPEVVKPVKLWYDAPMFRYERPQSGRLRQFHQFGVECLGLKNPAVDVEIIAMADTLFRQLGISGVKLSLNTLGDMESRKAYRQALIDYLTPFENQLSEDSRRRLNENPLRVLDSKEAEDIAIVKNAPAILDYLNETSKAYFEEVKALLEALNIEYTIDSNMVRGLDYYNDTIFEFIVNFDGKELTVCGGGRYDGLVEYFDGPATPAFGFGLGIERLLMIAEKQEINFIPEETLDVYIAVMGEKANLEATKLAESLREQAFKVERDFSNRKLGAQFKTAEKLGAELIITLGEDEVRTGQIKVKHNQTRKQVETTLQAVHESFAPIFEEIYADEIN.

The protein belongs to the class-II aminoacyl-tRNA synthetase family. As to quaternary structure, homodimer.

The protein resides in the cytoplasm. It catalyses the reaction tRNA(His) + L-histidine + ATP = L-histidyl-tRNA(His) + AMP + diphosphate + H(+). This Lactococcus lactis subsp. cremoris (strain MG1363) protein is Histidine--tRNA ligase.